Here is a 347-residue protein sequence, read N- to C-terminus: Eukaryotic translation initiation factor 3 subunit I (347 aa).

WD repeat units lie at residues 8–47, 50–89, 150–190, 192–233, and 289–328; these read GHERPLTQVKFNRDGDLVFACSKDSVASIWYAINGERLGT, DHSGTIWSIDVDESTTYALTGGADFCFKIWKVATGVAVHS, EQAT…VQAK, IHEK…KTYK, and GHFGPLNYVAVSPTGTSYASGGEDGYIRLHHFDKSYFDFK.

Belongs to the eIF-3 subunit I family. As to quaternary structure, component of the eukaryotic translation initiation factor 3 (eIF-3) complex.

Its subcellular location is the cytoplasm. Functionally, component of the eukaryotic translation initiation factor 3 (eIF-3) complex, which is involved in protein synthesis of a specialized repertoire of mRNAs and, together with other initiation factors, stimulates binding of mRNA and methionyl-tRNAi to the 40S ribosome. The eIF-3 complex specifically targets and initiates translation of a subset of mRNAs involved in cell proliferation. The sequence is that of Eukaryotic translation initiation factor 3 subunit I from Kluyveromyces lactis (strain ATCC 8585 / CBS 2359 / DSM 70799 / NBRC 1267 / NRRL Y-1140 / WM37) (Yeast).